A 1344-amino-acid chain; its full sequence is MALGDLMVSRFSQSSVSLVSNHRYDEDCVSSHDDGDSRRKDSEAKSSSSYGNGTTEGAATATSMAYLPQTIVLCELRHDASEASAPLGTSEIVLVPKWRLKERMKTGCVALVLCLNITVDPPDVIKISPCARIEAWIDPFSMAPPKALETIGKNLSTQYERWQPRARYKVQLDPTVDEVRKLCLTCRKYAKTERVLFHYNGHGVPKPTANGEIWVFNKSYTQYIPLPISELDSWLKTPSIYVFDCSAARMILNAFAELHDWGSSGSSGSSRDCILLAACDVHETLPQSVEFPADVFTSCLTTPIKMALKWFCRRSLLKEIIDESLIDRIPGRQNDRKTLLGELNWIFTAVTDTIAWNVLPHELFQRLFRQDLLVASLFRNFLLAERIMRSANCNPISHPMLPPTHQHHMWDAWDMAAEICLSQLPQLVLDPSTEFQPSPFFTEQLTAFEVWLDHGSEHKKPPEQLPIVLQVLLSQCHRFRALVLLGRFLDMGSWAVDLALSVGIFPYVLKLLQTTTNELRQILVFIWTKILALDKSCQIDLVKDGGHTYFIRFLDSSGAFPEQRAMAAFVLAVIVDGHRRGQEACLEANLIGVCLGHLEASRPSDPQPEPLFLQWLCLCLGKLWEDFMEAQIMGREANAFEKLAPLLSEPQPEVRAAAVFALGTLLDIGFDSNKSVVEDEFDDDEKIRAEDAIIKSLLDVVSDGSPLVRAEVAVALARFAFGHKQHLKLAAASYWKPQSSSLLTSLPSIAKFHDPGSATIVSLHMSPLTRASTDSQPVARESRISSSPLGSSGLMQGSPLSDDSSLHSDSGMMHDSVSNGAVHQPRLLDNAVYSQCVRAMFALAKDPSPRIASLGRRVLSIIGIEQVVAKPSKPTGRPGEAATTSHTPLAGLARSSSWFDMHAGNLPLSFRTPPVSPPRTNYLSGLRRVCSLEFRPHLLGSPDSGLADPLLGASGSERSLLPLSTIYGWSCGHFSKPLLGGADASQEIAAKREEKEKFALEHIAKCQHSSISKLNNNPIANWDTRFETGTKTALLHPFSPIVVAADENERIRVWNYEEATLLNGFDNHDFPDKGISKLCLINELDDSLLLVASCDGSVRIWKNYATKGKQKLVTGFSSIQGHKPGARDLNAVVDWQQQSGYLYASGETSTVTLWDLEKEQLVRSVPSESECGVTALSASQVHGGQLAAGFADGSLRLYDVRSPEPLVCATRPHQKVERVVGLSFQPGLDPAKVVSASQAGDIQFLDLRTTRDTYLTIDAHRGSLTALAVHRHAPIIASGSAKQLIKVFSLQGEQLGIIRYYPSFMAQKIGSVSCLTFHPYQVLLAAGAADSFVSIYTHDNSQAR.

Positions 28–44 (CVSSHDDGDSRRKDSEA) are enriched in basic and acidic residues. Disordered stretches follow at residues 28–56 (CVSS…GTTE) and 771–818 (ASTD…DSVS). A compositionally biased stretch (low complexity) spans 785–816 (SSSPLGSSGLMQGSPLSDDSSLHSDSGMMHDS). 7 WD repeats span residues 1025–1064 (RFET…LLNG), 1070–1111 (FPDK…GKQK), 1125–1164 (GARD…LVRS), 1168–1208 (ESEC…PLVC), 1214–1255 (QKVE…DTYL), 1259–1298 (AHRG…LGII), and 1307–1344 (QKIG…SQAR).

This sequence belongs to the WD repeat RAPTOR family. In terms of assembly, interacts with TOR, ATPK1 and ML1. Interacts with KIN10. Post-translationally, phosphorylated by KIN10. As to expression, expressed in roots, leaves, flowers and seeds.

It localises to the cytoplasm. Probable component of the plant TOR kinase pathway that recruits substrates for TOR. Modulates plant cell growth and regulates the activity of ATPK1 kinase in response to osmotic stress. The protein is Regulatory-associated protein of TOR 1 (RAPTOR1) of Arabidopsis thaliana (Mouse-ear cress).